We begin with the raw amino-acid sequence, 968 residues long: RNA polymerase-associated protein RapA (968 aa).

In terms of domain architecture, Helicase ATP-binding spans 164 to 334; it reads EVGQRHAPRV…FARLRLLDPD (171 aa). An ATP-binding site is contributed by 177–184; that stretch reads DEVGLGKT. The short motif at 280-283 is the DEAH box element; that stretch reads DEAH. The region spanning 490 to 644 is the Helicase C-terminal domain; that stretch reads RVEWLLNYLV…TCPTGRTIYD (155 aa).

The protein belongs to the SNF2/RAD54 helicase family. RapA subfamily. As to quaternary structure, interacts with the RNAP. Has a higher affinity for the core RNAP than for the holoenzyme. Its ATPase activity is stimulated by binding to RNAP.

Functionally, transcription regulator that activates transcription by stimulating RNA polymerase (RNAP) recycling in case of stress conditions such as supercoiled DNA or high salt concentrations. Probably acts by releasing the RNAP, when it is trapped or immobilized on tightly supercoiled DNA. Does not activate transcription on linear DNA. Probably not involved in DNA repair. In Yersinia pestis bv. Antiqua (strain Antiqua), this protein is RNA polymerase-associated protein RapA.